Here is a 541-residue protein sequence, read N- to C-terminus: Protein wntless homolog B (541 aa).

Residues 1–15 (MAGAIIENMSTKKLC) lie on the Cytoplasmic side of the membrane. The helical transmembrane segment at 16 to 36 (MVGVALLLLQVLAFLVGGLIA) threads the bilayer. Topologically, residues 37–232 (PKPTTYVNPV…SIFQNGGFTM (196 aa)) are lumenal. A helical membrane pass occupies residues 233–253 (VWFAMKTFLTPCIIIIMIWYW). The Cytoplasmic portion of the chain corresponds to 254–268 (RRITMMTRSPVLLEK). The helical transmembrane segment at 269–289 (VIFALGISMTFINIPVEWFSI) threads the bilayer. Residues 290 to 303 (GYDWTWMLLFGDIR) are Lumenal-facing. Residues 304-324 (QGIFYAMLLSFWIIFCGEHMM) form a helical membrane-spanning segment. Topologically, residues 325–331 (DQAERNR) are cytoplasmic. The helical transmembrane segment at 332 to 352 (ISIYWKQVGPIAFGSCCLFIF) threads the bilayer. The Lumenal portion of the chain corresponds to 353–379 (DMCERGVQLKNPFYSIWTTDVGAEIAM). A helical transmembrane segment spans residues 380–400 (AFIIVAGICACLYFLFLCFMV). The Cytoplasmic portion of the chain corresponds to 401-431 (YQVFRNISGKRSNLPAMSKARRLHYEGLIFR). A helical transmembrane segment spans residues 432-452 (FKFLMIITLACAALTVVFFIT). The Lumenal portion of the chain corresponds to 453–471 (TQITEGNWKLGDLSIELNS). The helical transmembrane segment at 472 to 492 (AFFTGIYGMWNLYVFALMFLY) threads the bilayer. Over 493–541 (APSHKHYGDGQSNDGAGMSSGEELQLTTTITHIDGPTELYRLAGKEAQE) the chain is Cytoplasmic.

The protein belongs to the wntless family. In terms of tissue distribution, enriched in the animal hemisphere of the early cleavage embryo, where expression persists until the late gastrula stage. At the neurula stage, strongly expressed at the border of the neural plate and dorsal midline. After the neurula stage, expressed in various organs, including the eye, liver, heart, pronephros, otic vesicle, and dorsal neural tube. Expression in the developing eye is dynamic; expressed in the eye field from stages 23 to 27, and from stage 30 expression is confined to distinct regions including the central part and border of the eye.

The protein resides in the golgi apparatus membrane. The protein localises to the cytoplasmic vesicle membrane. In terms of biological role, required for a subset of Wnt-dependent developmental processes, in particular, eye and pronephros development. Regulates the secretion of wnt4, which is required for eye development. The chain is Protein wntless homolog B (wls-b) from Xenopus laevis (African clawed frog).